The primary structure comprises 269 residues: Probable ribosomal RNA small subunit methyltransferase A (269 aa).

His-23, Leu-25, Gly-50, Glu-71, Asp-95, and Asn-110 together coordinate S-adenosyl-L-methionine.

This sequence belongs to the class I-like SAM-binding methyltransferase superfamily. rRNA adenine N(6)-methyltransferase family. RsmA subfamily.

It localises to the cytoplasm. Specifically dimethylates two adjacent adenosines in the loop of a conserved hairpin near the 3'-end of 16S rRNA in the 30S particle. May play a critical role in biogenesis of 30S subunits. This Pyrococcus abyssi (strain GE5 / Orsay) protein is Probable ribosomal RNA small subunit methyltransferase A.